A 286-amino-acid chain; its full sequence is Sulfate transport system permease protein CysT (286 aa).

7 helical membrane passes run 27–47 (WVVTIIYLLLILVLPIAALLV), 74–94 (FITALAAGLVNGVMGTLVAWV), 108–128 (AMVDLPFALPTSVAGLVLATL), 146–166 (IAFSRLGVFVAMVFISLPFIV), 195–215 (FWRVIFPPLIPPILTGIALGF), 224–244 (SVVLIASNIPFKDLIAPVLVF), and 257–276 (VIGAVLLSVSLILLLIINLL). Positions 70–273 (YNVTFITALA…SVSLILLLII (204 aa)) constitute an ABC transmembrane type-1 domain.

Belongs to the binding-protein-dependent transport system permease family. CysTW subfamily. In terms of assembly, the complex is composed of two ATP-binding proteins (CysA), two transmembrane proteins (CysT and CysW) and a solute-binding protein (CysP).

The protein localises to the cell inner membrane. Functionally, part of the ABC transporter complex CysAWTP (TC 3.A.1.6.1) involved in sulfate/thiosulfate import. Probably responsible for the translocation of the substrate across the membrane. This chain is Sulfate transport system permease protein CysT (cysT), found in Synechocystis sp. (strain ATCC 27184 / PCC 6803 / Kazusa).